The sequence spans 293 residues: Alcohol dehydrogenase 1 (293 aa).

Zn(2+)-binding residues include cysteine 26, cysteine 29, cysteine 32, cysteine 40, and cysteine 104. NAD(+) is bound by residues 129–134, aspartate 153, arginine 158, threonine 199, valine 222, 222–224, and phenylalanine 249; these read GLGAVG and VGV.

This sequence belongs to the zinc-containing alcohol dehydrogenase family. In terms of assembly, homodimer. Requires Zn(2+) as cofactor.

Its subcellular location is the cytoplasm. It carries out the reaction a primary alcohol + NAD(+) = an aldehyde + NADH + H(+). It catalyses the reaction a secondary alcohol + NAD(+) = a ketone + NADH + H(+). The sequence is that of Alcohol dehydrogenase 1 (ADH1) from Zea luxurians (Guatemalan teosinte).